We begin with the raw amino-acid sequence, 191 residues long: Cell division protein SepF (191 aa).

A compositionally biased stretch (polar residues) spans 156 to 167 (EEASPSNMSNKG). The interval 156–191 (EEASPSNMSNKGNDLISKETSPAPEPAWGETVATAL) is disordered.

It belongs to the SepF family. As to quaternary structure, homodimer. Interacts with FtsZ.

It is found in the cytoplasm. Functionally, cell division protein that is part of the divisome complex and is recruited early to the Z-ring. Probably stimulates Z-ring formation, perhaps through the cross-linking of FtsZ protofilaments. Its function overlaps with FtsA. In Prochlorococcus marinus (strain NATL1A), this protein is Cell division protein SepF.